The sequence spans 622 residues: Palmitoyl-protein thioesterase-dolichyl pyrophosphate phosphatase fusion 1 (622 aa).

The first 24 residues, 1–24 (MLSCSSFLIFFLFSWVLLPMKSFA), serve as a signal peptide directing secretion. At 25-405 (IPIISLDKVR…NVSEEKGPKS (381 aa)) the chain is on the lumenal side. C106 and C138 are oxidised to a cystine. S125 is a catalytic residue. N-linked (GlcNAc...) asparagine glycosylation is present at N223. The active site involves D245. An N-linked (GlcNAc...) asparagine glycan is attached at N260. The active site involves H298. The N-linked (GlcNAc...) asparagine glycan is linked to N396. The helical transmembrane segment at 406–426 (FANLAFITIFSHFFYHIDDMW) threads the bilayer. At 427 to 428 (RS) the chain is on the cytoplasmic side. A helical transmembrane segment spans residues 429–449 (TLGLFSLIPQIIGIIYLTVMF). Residues 450 to 488 (TGRELDTFMQFGGQVVNEFINYVVKVSLKYPRPADIEYG) lie on the Lumenal side of the membrane. A helical membrane pass occupies residues 489–511 (VGYGMPSSHSQFMGFFSAYMIAW). Residues 512 to 519 (DYKYRRSQ) are Cytoplasmic-facing. The helical transmembrane segment at 520-540 (CFSMLSFAKYAIYLTLSTFVC) threads the bilayer. Residues 541–552 (SSRYLLDFHYLT) lie on the Lumenal side of the membrane. A helical transmembrane segment spans residues 553–573 (QVVYGYMIGFGVGLFWVYLVG). Residues 574-622 (KLRSLGVTKWLLSLPPLQFFYIKDTIPHSKDNHKRQWLESKQFKNQKSN) lie on the Cytoplasmic side of the membrane.

In the N-terminal section; belongs to the palmitoyl-protein thioesterase family. This sequence in the C-terminal section; belongs to the dolichyldiphosphatase family. In terms of processing, proteolytically cleaved, possibly by krp1.

It is found in the vacuole. Its subcellular location is the endoplasmic reticulum membrane. The catalysed reaction is S-hexadecanoyl-L-cysteinyl-[protein] + H2O = L-cysteinyl-[protein] + hexadecanoate + H(+). It catalyses the reaction a di-trans,poly-cis-dolichyl diphosphate + H2O = a di-trans,poly-cis-dolichyl phosphate + phosphate + H(+). Its function is as follows. Essential protein. Removes thioester-linked fatty acyl groups such as palmitate from modified cysteine residues in proteins or peptides during vacuolar degradation. Required for efficient N-glycosylation. Necessary for maintaining optimal levels of dolichol-linked oligosaccharides. This is Palmitoyl-protein thioesterase-dolichyl pyrophosphate phosphatase fusion 1 (pdf1) from Schizosaccharomyces pombe (strain 972 / ATCC 24843) (Fission yeast).